Reading from the N-terminus, the 257-residue chain is MNPVAFEIFGLEIRWYGILICMGIILAYGLAYKRSKIYNIDFDKLTDVFIVALPFSILCARLYYVIFNWSYYGANPSHILYIREGGLAIHGGLIGAVISGYLMSRYRKLNFLDLIDTVAPCFILAQAIGRWGNFFNSEAHGGIVSYEFISHFPKFIQNGMYIDGFYYHPTFLYESIWNIVVLIILLLITRKHLAKGSIFYLYLIFYSLGRFFIEGLRTDSLMLGSLRMAQVISLVFIILGIILIIKSNIKNKSTFKQ.

The next 4 helical transmembrane spans lie at 8 to 28 (IFGL…ILAY), 48 to 68 (VFIV…VIFN), 84 to 104 (EGGL…YLMS), and 109 to 129 (LNFL…QAIG). Residue Arg-130 coordinates a 1,2-diacyl-sn-glycero-3-phospho-(1'-sn-glycerol). The next 3 membrane-spanning stretches (helical) occupy residues 169 to 189 (PTFL…LLIT), 196 to 216 (GSIF…IEGL), and 225 to 245 (SLRM…ILII).

The protein belongs to the Lgt family.

The protein localises to the cell membrane. It carries out the reaction L-cysteinyl-[prolipoprotein] + a 1,2-diacyl-sn-glycero-3-phospho-(1'-sn-glycerol) = an S-1,2-diacyl-sn-glyceryl-L-cysteinyl-[prolipoprotein] + sn-glycerol 1-phosphate + H(+). The protein operates within protein modification; lipoprotein biosynthesis (diacylglyceryl transfer). Its function is as follows. Catalyzes the transfer of the diacylglyceryl group from phosphatidylglycerol to the sulfhydryl group of the N-terminal cysteine of a prolipoprotein, the first step in the formation of mature lipoproteins. This is Phosphatidylglycerol--prolipoprotein diacylglyceryl transferase from Clostridium novyi (strain NT).